Here is a 139-residue protein sequence, read N- to C-terminus: Large ribosomal subunit protein uL16 (139 aa).

Over residues 1–17 (MLQPKRTKYRKQQKGRM) the composition is skewed to basic residues. Residues 1-25 (MLQPKRTKYRKQQKGRMKGLSQRGH) are disordered.

The protein belongs to the universal ribosomal protein uL16 family. As to quaternary structure, part of the 50S ribosomal subunit.

Binds 23S rRNA and is also seen to make contacts with the A and possibly P site tRNAs. This Christiangramia forsetii (strain DSM 17595 / CGMCC 1.15422 / KT0803) (Gramella forsetii) protein is Large ribosomal subunit protein uL16.